A 138-amino-acid polypeptide reads, in one-letter code: NADH dehydrogenase [ubiquinone] 1 alpha subcomplex subunit 12 (138 aa).

The segment at 97–116 is disordered; that stretch reads YKRPHIANPTGTDGAYTPPN.

It belongs to the complex I NDUFA12 subunit family. As to quaternary structure, complex I is composed of 45 different subunits.

It localises to the mitochondrion inner membrane. In terms of biological role, accessory subunit of the mitochondrial membrane respiratory chain NADH dehydrogenase (Complex I), that is believed not to be involved in catalysis. Complex I functions in the transfer of electrons from NADH to the respiratory chain. The immediate electron acceptor for the enzyme is believed to be ubiquinone. The chain is NADH dehydrogenase [ubiquinone] 1 alpha subcomplex subunit 12 (ndufa12) from Dictyostelium discoideum (Social amoeba).